A 244-amino-acid chain; its full sequence is MKIDLNADLGEGCASDAELLTLVSSANIACGFHAGDAQTMQACVREAIKNGVAIGAHPSFPDRENFGRSAMQLPPETVYAQTLYQIGALATIARAQGGVMRHVKPHGMLYNQTAKEAQLADAIARAVYACDPALVLVGLAGSELIRAGKQYGLTTREEVFADRGYQADGSLVPRSQPGALIENEEQALAQTLEMVQHGRVKSITGEWATVTAQTVCLHGDGEHALAFARRLRSTFAEKEIVVAA.

This sequence belongs to the LamB/PxpA family. As to quaternary structure, forms a complex composed of PxpA, PxpB and PxpC.

It catalyses the reaction 5-oxo-L-proline + ATP + 2 H2O = L-glutamate + ADP + phosphate + H(+). Functionally, catalyzes the cleavage of 5-oxoproline to form L-glutamate coupled to the hydrolysis of ATP to ADP and inorganic phosphate. This chain is 5-oxoprolinase subunit A, found in Shigella boydii serotype 18 (strain CDC 3083-94 / BS512).